The sequence spans 310 residues: Ribosomal protein uL3 glutamine methyltransferase (310 aa).

It belongs to the protein N5-glutamine methyltransferase family. PrmB subfamily.

The catalysed reaction is L-glutaminyl-[ribosomal protein uL3] + S-adenosyl-L-methionine = N(5)-methyl-L-glutaminyl-[ribosomal protein uL3] + S-adenosyl-L-homocysteine + H(+). Its function is as follows. Specifically methylates large ribosomal subunit protein uL3 on 'Gln-150'. The protein is Ribosomal protein uL3 glutamine methyltransferase of Salmonella typhi.